Consider the following 217-residue polypeptide: Putative cobalt transport protein CbiM (217 aa).

Transmembrane regions (helical) follow at residues 8–28 (LPPE…VYGA), 44–64 (LIAV…PSVT), 74–94 (GIAV…IVLL), 107–127 (TLGA…WIAF), 139–161 (VFAA…LALA), and 181–201 (IFAV…VMLV).

It belongs to the CbiM family. In terms of assembly, forms an energy-coupling factor (ECF) transporter complex composed of an ATP-binding protein (A component, CbiO), a transmembrane protein (T component, CbiQ) and 2 possible substrate-capture proteins (S components, CbiM and CbiN) of unknown stoichimetry.

Its subcellular location is the cell membrane. It participates in cofactor biosynthesis; adenosylcobalamin biosynthesis. Functionally, part of the energy-coupling factor (ECF) transporter complex CbiMNOQ involved in cobalt import. This chain is Putative cobalt transport protein CbiM, found in Archaeoglobus fulgidus (strain ATCC 49558 / DSM 4304 / JCM 9628 / NBRC 100126 / VC-16).